Consider the following 262-residue polypeptide: Thiamine thiazole synthase (262 aa).

NAD(+) is bound by residues Ser-40, Glu-59 to Arg-60, Gly-67, Val-133, and His-159 to Asp-161. 2 residues coordinate Fe cation: Asp-161 and His-176. NAD(+) contacts are provided by Ser-179 and Met-226. Residue Arg-236 participates in glycine binding.

This sequence belongs to the THI4 family. As to quaternary structure, homooctamer; tetramer of dimers. Fe(2+) is required as a cofactor.

The enzyme catalyses hydrogen sulfide + glycine + NAD(+) = ADP-5-ethyl-4-methylthiazole-2-carboxylate + nicotinamide + 3 H2O + H(+). It participates in cofactor biosynthesis; thiamine diphosphate biosynthesis. Its function is as follows. Involved in the biosynthesis of the thiazole moiety of thiamine. Catalyzes the conversion of NAD and glycine to adenosine diphosphate 5-(2-hydroxyethyl)-4-methylthiazole-2-carboxylate (ADT), an adenylated thiazole intermediate, using free sulfide as a source of sulfur. The protein is Thiamine thiazole synthase of Methanococcus maripaludis (strain C7 / ATCC BAA-1331).